Here is a 202-residue protein sequence, read N- to C-terminus: Ribonuclease HII (202 aa).

The region spanning 12–201 (LLIAGVDEAG…VRQLKLFIPE (190 aa)) is the RNase H type-2 domain. Residues Asp18, Glu19, and Asp110 each coordinate a divalent metal cation.

It belongs to the RNase HII family. Mn(2+) serves as cofactor. Requires Mg(2+) as cofactor.

The protein resides in the cytoplasm. It carries out the reaction Endonucleolytic cleavage to 5'-phosphomonoester.. Endonuclease that specifically degrades the RNA of RNA-DNA hybrids. The protein is Ribonuclease HII of Coxiella burnetii (strain CbuG_Q212) (Coxiella burnetii (strain Q212)).